Reading from the N-terminus, the 741-residue chain is Transketolase, chloroplastic (741 aa).

Residues 1 to 67 (MASSSSLTLS…TKQQFSVRAS (67 aa)) constitute a chloroplast transit peptide. Substrate is bound at residue His-103. Thiamine diphosphate contacts are provided by residues His-143 and 192–194 (GPL). Residue Asp-233 coordinates Mg(2+). The thiamine diphosphate site is built by Gly-234 and Asn-263. Residues Asn-263 and Ile-265 each coordinate Mg(2+). 3 residues coordinate substrate: His-340, Arg-434, and Ser-461. His-340 provides a ligand contact to thiamine diphosphate. Thiamine diphosphate is bound by residues Glu-488 and Phe-515. The active-site Proton donor is Glu-488. Substrate is bound by residues His-539, Asp-547, and Arg-598.

Belongs to the transketolase family. In terms of assembly, homodimer. The cofactor is Mg(2+). Ca(2+) serves as cofactor. Requires Mn(2+) as cofactor. Co(2+) is required as a cofactor. It depends on thiamine diphosphate as a cofactor.

It localises to the plastid. The protein localises to the chloroplast thylakoid membrane. The enzyme catalyses D-sedoheptulose 7-phosphate + D-glyceraldehyde 3-phosphate = aldehydo-D-ribose 5-phosphate + D-xylulose 5-phosphate. Its pathway is carbohydrate biosynthesis; Calvin cycle. Its function is as follows. Catalyzes the reversible transfer of a two-carbon ketol group from fructose-6-phosphate or sedoheptulose-7-phosphate to glyceraldehyde-3-phosphate to yield xylulose-5-phosphate and erythrose-4-phosphate or ribose-5-phosphate, respectively. This Solanum tuberosum (Potato) protein is Transketolase, chloroplastic.